Reading from the N-terminus, the 902-residue chain is Desmocollin-2 (902 aa).

An N-terminal signal peptide occupies residues Met-1–Leu-27. The propeptide occupies Ala-28–Arg-135. Cadherin domains are found at residues Arg-136–Phe-243, Thr-244–Phe-355, Thr-356–Cys-471, Ile-472–Lys-579, and Gln-580–Pro-694. Residues Arg-136–Pro-694 lie on the Extracellular side of the membrane. Asn-166 is a glycosylation site (N-linked (GlcNAc...) asparagine). Asn-392, Asn-546, and Asn-629 each carry an N-linked (GlcNAc...) asparagine glycan. Residues Trp-695–Val-715 form a helical membrane-spanning segment. The Cytoplasmic portion of the chain corresponds to Cys-716 to Arg-902. A phosphoserine mark is found at Ser-865, Ser-869, and Ser-874.

As to quaternary structure, interacts with DSP, PKP2 and JUP. Interacts with DSG3; the interaction may limit the interaction of DSC3 with p38MAPK family members and therefore repress p38MAPK signaling activation. In terms of tissue distribution, expressed in intestinal epithelial cells (at protein level). Expressed in the heart. Expressed in tongue, bladder, stomach, liver, kidney, and lung.

It is found in the cell membrane. It localises to the cell junction. Its subcellular location is the desmosome. A component of desmosome cell-cell junctions which are required for positive regulation of cellular adhesion. Promotes timely incorporation of DSG2 into desmosome intercellular junctions and promotes interaction of desmosome cell junctions with intermediate filament cytokeratin, via modulation of DSP phosphorylation. Plays an important role in desmosome-mediated maintenance of intestinal epithelial cell intercellular adhesion strength and barrier function. Positively regulates wound healing of intestinal mucosa via promotion of epithelial cell migration, and also plays a role in mechanotransduction of force between intestinal epithelial cells and extracellular matrix. May contribute to epidermal cell positioning (stratification) by mediating differential adhesiveness between cells that express different isoforms. May promote p38MAPK signaling activation that facilitates keratinocyte migration. This Mus musculus (Mouse) protein is Desmocollin-2 (Dsc2).